A 287-amino-acid polypeptide reads, in one-letter code: ATP synthase gamma chain (287 aa).

Belongs to the ATPase gamma chain family. As to quaternary structure, F-type ATPases have 2 components, CF(1) - the catalytic core - and CF(0) - the membrane proton channel. CF(1) has five subunits: alpha(3), beta(3), gamma(1), delta(1), epsilon(1). CF(0) has three main subunits: a, b and c.

Its subcellular location is the cell inner membrane. In terms of biological role, produces ATP from ADP in the presence of a proton gradient across the membrane. The gamma chain is believed to be important in regulating ATPase activity and the flow of protons through the CF(0) complex. This chain is ATP synthase gamma chain, found in Klebsiella pneumoniae subsp. pneumoniae (strain ATCC 700721 / MGH 78578).